The primary structure comprises 224 residues: Urease accessory protein UreF (224 aa).

This sequence belongs to the UreF family. UreD, UreF and UreG form a complex that acts as a GTP-hydrolysis-dependent molecular chaperone, activating the urease apoprotein by helping to assemble the nickel containing metallocenter of UreC. The UreE protein probably delivers the nickel.

The protein resides in the cytoplasm. In terms of biological role, required for maturation of urease via the functional incorporation of the urease nickel metallocenter. The chain is Urease accessory protein UreF from Ectopseudomonas mendocina (strain ymp) (Pseudomonas mendocina).